The sequence spans 278 residues: Shikimate dehydrogenase (NADP(+)) (278 aa).

Residues 15–17 (SMS) and Thr-62 contribute to the shikimate site. Lys-66 functions as the Proton acceptor in the catalytic mechanism. Glu-78 lines the NADP(+) pocket. Asn-87 and Asp-102 together coordinate shikimate. Residues 127-131 (GAGGA), 151-156 (NRTPEK), and Ile-217 contribute to the NADP(+) site. Residue Tyr-219 coordinates shikimate. An NADP(+)-binding site is contributed by Gly-240.

The protein belongs to the shikimate dehydrogenase family. As to quaternary structure, homodimer.

The enzyme catalyses shikimate + NADP(+) = 3-dehydroshikimate + NADPH + H(+). It functions in the pathway metabolic intermediate biosynthesis; chorismate biosynthesis; chorismate from D-erythrose 4-phosphate and phosphoenolpyruvate: step 4/7. Functionally, involved in the biosynthesis of the chorismate, which leads to the biosynthesis of aromatic amino acids. Catalyzes the reversible NADPH linked reduction of 3-dehydroshikimate (DHSA) to yield shikimate (SA). The polypeptide is Shikimate dehydrogenase (NADP(+)) (Bacillus licheniformis (strain ATCC 14580 / DSM 13 / JCM 2505 / CCUG 7422 / NBRC 12200 / NCIMB 9375 / NCTC 10341 / NRRL NRS-1264 / Gibson 46)).